The following is a 657-amino-acid chain: uncharacterized protein (657 aa).

Active-site charge relay system residues include Ser-518 and His-631.

The protein belongs to the peptidase S9C family.

This is an uncharacterized protein from Bacillus subtilis (strain 168).